The chain runs to 681 residues: Methionine--tRNA ligase (681 aa).

The short motif at 14–24 is the 'HIGH' region element; it reads PYANGSIHLGH. Cysteine 145, cysteine 148, cysteine 158, and cysteine 161 together coordinate Zn(2+). The 'KMSKS' region motif lies at 331-335; it reads KMSKS. Lysine 334 is a binding site for ATP. One can recognise a tRNA-binding domain in the interval 579 to 681; sequence TFAAVDLRVA…SGAKPGQRIK (103 aa).

This sequence belongs to the class-I aminoacyl-tRNA synthetase family. MetG type 1 subfamily. As to quaternary structure, homodimer. Zn(2+) is required as a cofactor.

It localises to the cytoplasm. It carries out the reaction tRNA(Met) + L-methionine + ATP = L-methionyl-tRNA(Met) + AMP + diphosphate. Its function is as follows. Is required not only for elongation of protein synthesis but also for the initiation of all mRNA translation through initiator tRNA(fMet) aminoacylation. The sequence is that of Methionine--tRNA ligase from Pseudomonas putida (strain W619).